Here is a 409-residue protein sequence, read N- to C-terminus: DNA primase DnaG (409 aa).

One can recognise a Toprim domain in the interval 175-261; the sequence is DAIIVVEGRA…EVEELTRKEI (87 aa). Mg(2+)-binding residues include E181, D223, and D225. The segment covering 280 to 289 has biased composition (basic and acidic residues); it reads ERPKDKEREK. The tract at residues 280–322 is disordered; the sequence is ERPKDKEREKGKKPKPKKRPERRGRPRKKKARPKRGPQERRLL. The segment covering 290-314 has biased composition (basic residues); it reads GKKPKPKKRPERRGRPRKKKARPKR.

It belongs to the archaeal DnaG primase family. As to quaternary structure, forms a ternary complex with MCM helicase and DNA. Component of the archaeal exosome complex. Mg(2+) is required as a cofactor.

It catalyses the reaction ssDNA + n NTP = ssDNA/pppN(pN)n-1 hybrid + (n-1) diphosphate.. In terms of biological role, RNA polymerase that catalyzes the synthesis of short RNA molecules used as primers for DNA polymerase during DNA replication. Also part of the exosome, which is a complex involved in RNA degradation. Acts as a poly(A)-binding protein that enhances the interaction between heteromeric, adenine-rich transcripts and the exosome. The protein is DNA primase DnaG of Methanopyrus kandleri (strain AV19 / DSM 6324 / JCM 9639 / NBRC 100938).